A 508-amino-acid chain; its full sequence is Photosystem II CP47 reaction center protein (508 aa).

Helical transmembrane passes span 21-36, 101-115, 140-156, 203-218, 237-252, and 457-472; these read AVHI…WAGS, ILFS…IWHW, GIHL…FGAF, IAAG…FHLS, VLSS…AFVV, and SFAL…HGAR.

Belongs to the PsbB/PsbC family. PsbB subfamily. In terms of assembly, PSII is composed of 1 copy each of membrane proteins PsbA, PsbB, PsbC, PsbD, PsbE, PsbF, PsbH, PsbI, PsbJ, PsbK, PsbL, PsbM, PsbT, PsbX, PsbY, PsbZ, Psb30/Ycf12, at least 3 peripheral proteins of the oxygen-evolving complex and a large number of cofactors. It forms dimeric complexes. Binds multiple chlorophylls. PSII binds additional chlorophylls, carotenoids and specific lipids. is required as a cofactor.

It localises to the plastid. The protein resides in the chloroplast thylakoid membrane. Functionally, one of the components of the core complex of photosystem II (PSII). It binds chlorophyll and helps catalyze the primary light-induced photochemical processes of PSII. PSII is a light-driven water:plastoquinone oxidoreductase, using light energy to abstract electrons from H(2)O, generating O(2) and a proton gradient subsequently used for ATP formation. This chain is Photosystem II CP47 reaction center protein, found in Oenothera argillicola (Appalachian evening primrose).